The primary structure comprises 150 residues: MQFEERLQQLVESDWSLDQSSPNVLVIVLGDTARKYVELGGLKEHVTTNTVAGHVASRERVSVVFLGRVKYLYMYLTRMQAQANGPQYSNVLVYGLWDLTATQDGPQQLRLLSLVLRQCLSLPSKVEFYPEPPSSSVPARLLRFWDHIIR.

In terms of assembly, component of the SHU complex composed of at least CSM2, PSY3, SHU1 and SHU2.

Its subcellular location is the nucleus. Functionally, plays a role in a RAD51/RAD54-dependent homologous recombination repair (HRR) pathway to repair MMS-induced lesions during S-phase. The polypeptide is Suppressor of HU sensitivity involved in recombination protein 1 (SHU1) (Saccharomyces cerevisiae (strain ATCC 204508 / S288c) (Baker's yeast)).